Here is a 1168-residue protein sequence, read N- to C-terminus: MTILTTLIKEDNHFQDLNQVFGQANTLVTGLSPSAKVTMIAEKYAQSNQQLLLITNNLYQADKLETDLLQFVDVEELYKYPVQDIMTEEFSTQSPQLMSERIRTLTALAQGKKGLFIVPLNGLKKWLTPVEMWQNHQMTLRVGEDIDVDQFLNKLVNMGYKRESVVSHIGEFSLRGGIIDIFPLIGEPIRIELFDTEIDSIRDFDVETQRSKDNIEEVDITTASDYIITEEVISHLKEELKTAYENTRPKIDKSVRNDLKETYESFKLFESTYFDHQILRRLVAFMYETPSTIIDYFQKDAIIAVDEFNRIKETEESLTVESDSFISNVIESGNGFIGQSFIKYDDFETLIEGYPVTYFSLFATTMPIKLNHIIKFSCKPVQQFYGQYDIMRSEFQRYVNQNYHIVVLVETETKVERMQAMLSEMHIPSITKLHRSMSSGQAVIIEGSLSEGFELPDMGLVVITERELFKSKQKKQRKRTKAISNAEKIKSYQDLNVGDYIVHVHHGVGRYLGVETLEVGQIHRDYIKLQYKGTDQLFVPVDQMDQVQKYVASEDKTPKLNKLGGSEWKKTKAKVQQSVEDIAEELIDLYKEREMAEGYQYGEDTAEQTTFELDFPYELTPDQAKSIDEIKDDMQKSRPMDRLLCGDVGYGKTEVAVRAAFKAVMEGKQVAFLVPTTILAQQHYETLIERMQDFPVEIQLMSRFRTPKEIKQTKEGLKTGFVDIVVGTHKLLSKDIQYKDLGLLIVDEEQRFGVRHKERIKTLKHNVDVLTLTATPIPRTLHMSMLGVRDLSVIETPPENRFPVQTYVLEQNMSFIKEALERELSRDGQVFYLYNKVQSIYEKREQLQMLMPDANIAVAHGQMTERDLEETMLSFINNEYDILVTTTIIETGVDVPNANTLIIEDADRFGLSQLYQLRGRVGRSSRIGYAYFLHPANKVLTETAEDRLQAIKEFTELGSGFKIAMRDLNIRGAGNLLGKQQHGFIDTVGFDLYSQMLEEAVNEKRGIKEPESEVPEVEVDLNLDAYLPTEYIANEQAKIEIYKKLRKTETFDQIIDIKDELIDRFNDYPVEVARLLDIVEIKVHALHSGITLIKDKGKIIDIHLSVKATENIDGEVLFKATQPLGRTMKVGVQNNAMTITLTKQNQWLDSLKFLVKCIEESMRISDEA.

The Helicase ATP-binding domain maps to 633–794; that stretch reads DMQKSRPMDR…MLGVRDLSVI (162 aa). 646–653 contributes to the ATP binding site; the sequence is GDVGYGKT. Residues 747 to 750 carry the DEEQ box motif; the sequence is DEEQ. A Helicase C-terminal domain is found at 808-969; that stretch reads VLEQNMSFIK…GFKIAMRDLN (162 aa).

This sequence in the N-terminal section; belongs to the UvrB family. In the C-terminal section; belongs to the helicase family. RecG subfamily.

It is found in the cytoplasm. Its function is as follows. Couples transcription and DNA repair by recognizing RNA polymerase (RNAP) stalled at DNA lesions. Mediates ATP-dependent release of RNAP and its truncated transcript from the DNA, and recruitment of nucleotide excision repair machinery to the damaged site. This is Transcription-repair-coupling factor from Staphylococcus aureus (strain MRSA252).